We begin with the raw amino-acid sequence, 88 residues long: Apolipoprotein C-I (88 aa).

An N-terminal signal peptide occupies residues 1–26 (MRLLISLPVLIVVLAMALEGPAPAQA).

This sequence belongs to the apolipoprotein C1 family.

It is found in the secreted. In terms of biological role, inhibitor of lipoprotein binding to the low density lipoprotein (LDL) receptor, LDL receptor-related protein, and very low density lipoprotein (VLDL) receptor. Associates with high density lipoproteins (HDL) and the triacylglycerol-rich lipoproteins in the plasma and makes up about 10% of the protein of the VLDL and 2% of that of HDL. Appears to interfere directly with fatty acid uptake and is also the major plasma inhibitor of cholesteryl ester transfer protein (CETP). Modulates the interaction of APOE with beta-migrating VLDL and inhibits binding of beta-VLDL to the LDL receptor-related protein. Binds free fatty acids and reduces their intracellular esterification. The chain is Apolipoprotein C-I (APOC1) from Mesocricetus auratus (Golden hamster).